Consider the following 768-residue polypeptide: Protein STRUBBELIG (768 aa).

A signal peptide spans 1–24 (MSFTRWEVFFGLSVLALTMPFSAG). The Extracellular segment spans residues 25 to 341 (VTNLRDVSAI…GSGKFWSTQR (317 aa)). Cys-57 and Cys-66 form a disulfide bridge. Asn-70 is a glycosylation site (N-linked (GlcNAc...) asparagine). LRR repeat units lie at residues 94–115 (SIQV…ALPS), 116–139 (SIRN…SFLS), 140–162 (DLSE…FQQL), 164–186 (KLTK…MGDL), 188–210 (SLKI…EDLF), and 211–231 (LTDL…NLLK). Asn-119 carries an N-linked (GlcNAc...) asparagine glycan. Residues 241-334 (PFNTSIITPP…ISPPSGSGSG (94 aa)) form a disordered region. N-linked (GlcNAc...) asparagine glycosylation is present at Asn-243. Composition is skewed to pro residues over residues 248 to 283 (TPPP…PFAP) and 291 to 301 (QHPPPSPPLVW). The segment covering 315 to 334 (NSVSGQPTLQISPPSGSGSG) has biased composition (polar residues). The helical transmembrane segment at 342–362 (IILVVSSVAIIVLVSGLCVTL) threads the bilayer. The Cytoplasmic portion of the chain corresponds to 363 to 768 (WRCCRSKIYN…EIVQDLQHMI (406 aa)). Residues 385 to 477 (PYFNKPPSQP…RAAHFPPGLN (93 aa)) are disordered. Polar residues predominate over residues 439–464 (SYYNKDVNTPQKPLQQPPRQFQSNDT). Residues 497 to 768 (FSEENIIGEG…EIVQDLQHMI (272 aa)) enclose the Protein kinase domain. Residues 503 to 511 (IGEGSIGNV) and Lys-525 each bind ATP.

This sequence belongs to the protein kinase superfamily. Ser/Thr protein kinase family. In terms of assembly, interacts (via intra-cellular domain) with AN; this interaction is not required for correct subcellular localization and recycling of SUB. Binds to QKY and POQ at the plasma membrane. Binds to QKY at plasmodesmata (PD) in root epidermal cells to promote tissue morphogenesis. Expressed in leaves, stems, inflorescences, flower buds and developing root epidermis.

The protein resides in the cell membrane. It localises to the cell junction. The protein localises to the plasmodesma. Its activity is regulated as follows. Regulated at the post-transcriptional level. Functionally, regulates the expression of transcription factors that define the cell fates. Acts in a non-cell-autonomous fashion, functions in a radial inside-out signaling process, and mediates cell morphogenesis and cell fate across clonally distinct cell layers in floral primordia, developing ovules, and root meristems. Seems to be required for the regulation of cell shape and the orientation of the mitotic division plane. Involved in root hair specification, in the formation of the outer integument and the shape of organs such as carpels and petals and is necessary for the shape and height of the stem. Non-functional SUB proteins are retained in the endoplasmic reticulum and degraded by endoplasmic reticulum-associated degradation (ERAD). Collaboratively with QKY and POQ, regulates cell growth anisotropy during gynoecium development, thus linking together cell-cell communication and cellular growth. Together with QKY, links RLK-dependent signal transduction and intercellular communication mediated by plasmodesmata (PD) to regulate tissue morphogenesis. This chain is Protein STRUBBELIG, found in Arabidopsis thaliana (Mouse-ear cress).